Reading from the N-terminus, the 411-residue chain is Imidazolonepropionase (411 aa).

Fe(3+)-binding residues include His75 and His77. Residues His75 and His77 each coordinate Zn(2+). Positions 84, 147, and 180 each coordinate 4-imidazolone-5-propanoate. Position 147 (Tyr147) interacts with N-formimidoyl-L-glutamate. His245 is a binding site for Fe(3+). His245 contacts Zn(2+). Gln248 contributes to the 4-imidazolone-5-propanoate binding site. Asp320 serves as a coordination point for Fe(3+). Asp320 serves as a coordination point for Zn(2+). 2 residues coordinate N-formimidoyl-L-glutamate: Asn322 and Gly324. Thr325 is a binding site for 4-imidazolone-5-propanoate.

Belongs to the metallo-dependent hydrolases superfamily. HutI family. The cofactor is Zn(2+). Requires Fe(3+) as cofactor.

It is found in the cytoplasm. The catalysed reaction is 4-imidazolone-5-propanoate + H2O = N-formimidoyl-L-glutamate. Its pathway is amino-acid degradation; L-histidine degradation into L-glutamate; N-formimidoyl-L-glutamate from L-histidine: step 3/3. Functionally, catalyzes the hydrolytic cleavage of the carbon-nitrogen bond in imidazolone-5-propanoate to yield N-formimidoyl-L-glutamate. It is the third step in the universal histidine degradation pathway. In Aeromonas salmonicida (strain A449), this protein is Imidazolonepropionase.